The sequence spans 884 residues: Blastomere cadherin (884 aa).

The signal sequence occupies residues Met-1–Ser-26. A propeptide spanning residues Ile-27–Arg-157 is cleaved from the precursor. 5 Cadherin domains span residues Asp-158–Phe-265, Thr-266–Phe-378, Asp-379–Phe-489, Val-490–Pro-595, and Val-596–Leu-706. Over Asp-158–Leu-706 the chain is Extracellular. Residues Asn-427, Asn-560, and Asn-683 are each glycosylated (N-linked (GlcNAc...) asparagine). The helical transmembrane segment at Pro-707–Leu-730 threads the bilayer. Topologically, residues Lys-731–Glu-884 are cytoplasmic.

As to expression, expressed in pituitary gland, lung and kidney.

It localises to the cell membrane. Cadherins are calcium-dependent cell adhesion proteins. They preferentially interact with themselves in a homophilic manner in connecting cells; cadherins may thus contribute to the sorting of heterogeneous cell types. This chain is Blastomere cadherin, found in Xenopus laevis (African clawed frog).